The following is a 497-amino-acid chain: Cytochrome P450 monooxygenase opdB (497 aa).

Residues 26–46 (YLGAMAGSVILLISAFTLSLG) traverse the membrane as a helical segment. The interval 69–90 (MSKFTRSRELSQQGEDAAGTEP) is disordered. Heme is bound at residue C454.

Heme serves as cofactor.

It is found in the membrane. It participates in secondary metabolite biosynthesis. Its function is as follows. Cytochrome P450 monooxygenase; part of the gene cluster that mediates the biosynthesis of oxopyrrolidines, polyketide-amino acid hybrid compounds with feature structures of tetramic acid. Does not seem to play a role in oxopyrrolidines A and B biosynthesis. May be involved in further modifications of these oxopyrrolidines. The protein is Cytochrome P450 monooxygenase opdB of Penicillium oxalicum (strain 114-2 / CGMCC 5302) (Penicillium decumbens).